Consider the following 484-residue polypeptide: Poly(A) RNA polymerase GLD2 (484 aa).

Phosphoserine is present on residues S62 and S69. Positions 76-92 (KRLSDEKNLPLDGKRQR) match the Nuclear localization signal motif. S95 carries the phosphoserine modification. Residues D213 and D215 each coordinate Mg(2+). Positions 386–440 (NLGDLLLGFLKYYATEFDWNSQMISVREAKAIPRPDGIEWRNKYICVEEPFDGTN) constitute a PAP-associated domain.

The protein belongs to the DNA polymerase type-B-like family. GLD2 subfamily. As to quaternary structure, interacts with CPEB1, CPEB2, CPSF1 and PABPC1. Interacts with QKI isoform QKI7; promoting recruitment to miRNA miR-122 and miR-122 stabilization. It depends on Mg(2+) as a cofactor. Mn(2+) serves as cofactor.

The protein resides in the cytoplasm. It is found in the nucleus. It catalyses the reaction RNA(n) + ATP = RNA(n)-3'-adenine ribonucleotide + diphosphate. In terms of biological role, cytoplasmic poly(A) RNA polymerase that adds successive AMP monomers to the 3'-end of specific RNAs, forming a poly(A) tail. In contrast to the canonical nuclear poly(A) RNA polymerase, it only adds poly(A) to selected cytoplasmic mRNAs. Does not play a role in replication-dependent histone mRNA degradation. Adds a single nucleotide to the 3' end of specific miRNAs, monoadenylation stabilizes and prolongs the activity of some but not all miRNAs. The polypeptide is Poly(A) RNA polymerase GLD2 (Bos taurus (Bovine)).